Consider the following 99-residue polypeptide: Malonate decarboxylase acyl carrier protein (99 aa).

O-(phosphoribosyl dephospho-coenzyme A)serine is present on serine 25.

It belongs to the MdcC family. Covalently binds the prosthetic group of malonate decarboxylase.

It localises to the cytoplasm. In terms of biological role, subunit of malonate decarboxylase, it is an acyl carrier protein to which acetyl and malonyl thioester residues are bound via a 2'-(5''-phosphoribosyl)-3'-dephospho-CoA prosthetic group and turn over during the catalytic mechanism. The protein is Malonate decarboxylase acyl carrier protein of Pseudomonas putida (strain GB-1).